The chain runs to 75 residues: Small ribosomal subunit protein bS18 (75 aa).

Belongs to the bacterial ribosomal protein bS18 family. As to quaternary structure, part of the 30S ribosomal subunit. Forms a tight heterodimer with protein bS6.

Binds as a heterodimer with protein bS6 to the central domain of the 16S rRNA, where it helps stabilize the platform of the 30S subunit. The sequence is that of Small ribosomal subunit protein bS18 from Vibrio atlanticus (strain LGP32) (Vibrio splendidus (strain Mel32)).